A 252-amino-acid chain; its full sequence is Adaptation to cold protein B (252 aa).

In terms of assembly, interacts with AtcC, but not with AtcA and AtcJ. Interacts with the RNA polymerase subunits RpoB and RpoC.

Involved in cold adaptation. Directly interacts with the RNA polymerase and decreases its activity. May direct the DnaK chaperone to the RNA polymerase to sustain life at low temperatures. Overproduction prevents bacterial growth due to RNA polymerase inhibition. In Shewanella oneidensis (strain ATCC 700550 / JCM 31522 / CIP 106686 / LMG 19005 / NCIMB 14063 / MR-1), this protein is Adaptation to cold protein B.